Reading from the N-terminus, the 400-residue chain is Argininosuccinate synthase (400 aa).

A8–S16 contacts ATP. Residues Y87 and S92 each contribute to the L-citrulline site. Residue G117 participates in ATP binding. T119, N123, and D124 together coordinate L-aspartate. N123 is a binding site for L-citrulline. L-citrulline is bound by residues R127, S175, E259, and Y271.

The protein belongs to the argininosuccinate synthase family. Type 1 subfamily. In terms of assembly, homotetramer.

Its subcellular location is the cytoplasm. It carries out the reaction L-citrulline + L-aspartate + ATP = 2-(N(omega)-L-arginino)succinate + AMP + diphosphate + H(+). It functions in the pathway amino-acid biosynthesis; L-arginine biosynthesis; L-arginine from L-ornithine and carbamoyl phosphate: step 2/3. This chain is Argininosuccinate synthase, found in Frankia alni (strain DSM 45986 / CECT 9034 / ACN14a).